A 332-amino-acid chain; its full sequence is L-lactate dehydrogenase A chain (332 aa).

NAD(+)-binding positions include 29-57 (GAVGMACAISILMKDLADELALVDVIEDK) and R99. The substrate site is built by R106, N138, and R169. N138 contacts NAD(+). H193 serves as the catalytic Proton acceptor. T248 lines the substrate pocket.

It belongs to the LDH/MDH superfamily. LDH family. As to quaternary structure, homotetramer.

The protein resides in the cytoplasm. The enzyme catalyses (S)-lactate + NAD(+) = pyruvate + NADH + H(+). The protein operates within fermentation; pyruvate fermentation to lactate; (S)-lactate from pyruvate: step 1/1. Functionally, interconverts simultaneously and stereospecifically pyruvate and lactate with concomitant interconversion of NADH and NAD(+). In Trachemys scripta elegans (Red-eared slider turtle), this protein is L-lactate dehydrogenase A chain (LDHA).